Here is a 230-residue protein sequence, read N- to C-terminus: Leucyl/phenylalanyl-tRNA--protein transferase (230 aa).

The protein belongs to the L/F-transferase family.

It localises to the cytoplasm. The catalysed reaction is N-terminal L-lysyl-[protein] + L-leucyl-tRNA(Leu) = N-terminal L-leucyl-L-lysyl-[protein] + tRNA(Leu) + H(+). The enzyme catalyses N-terminal L-arginyl-[protein] + L-leucyl-tRNA(Leu) = N-terminal L-leucyl-L-arginyl-[protein] + tRNA(Leu) + H(+). It catalyses the reaction L-phenylalanyl-tRNA(Phe) + an N-terminal L-alpha-aminoacyl-[protein] = an N-terminal L-phenylalanyl-L-alpha-aminoacyl-[protein] + tRNA(Phe). Functions in the N-end rule pathway of protein degradation where it conjugates Leu, Phe and, less efficiently, Met from aminoacyl-tRNAs to the N-termini of proteins containing an N-terminal arginine or lysine. This is Leucyl/phenylalanyl-tRNA--protein transferase from Proteus mirabilis (strain HI4320).